A 59-amino-acid polypeptide reads, in one-letter code: UPF0434 protein HEAR2489 (59 aa).

The protein belongs to the UPF0434 family.

In Herminiimonas arsenicoxydans, this protein is UPF0434 protein HEAR2489.